The sequence spans 67 residues: MLCLPVFIILLLLASPAASNPLEKRIQSDLIRAALEDADTKNDPRLLGLVTGACCAVLKFSFCCGKK.

Residues 1–19 (MLCLPVFIILLLLASPAAS) form the signal peptide. Residues 20 to 45 (NPLEKRIQSDLIRAALEDADTKNDPR) constitute a propeptide that is removed on maturation. Cys64 carries the post-translational modification Cysteine amide.

Belongs to the conotoxin T superfamily. Post-translationally, contains 2 disulfide bonds that can be either 'C1-C3, C2-C4' or 'C1-C4, C2-C3', since these disulfide connectivities have been observed for conotoxins with cysteine framework V (for examples, see AC P0DQQ7 and AC P81755). In terms of tissue distribution, expressed by the venom duct.

Its subcellular location is the secreted. In Conus arenatus (Sand-dusted cone), this protein is Conotoxin ArMLCL-012.